Here is a 134-residue protein sequence, read N- to C-terminus: Large ribosomal subunit protein eL32 (134 aa).

Belongs to the eukaryotic ribosomal protein eL32 family.

In Spodoptera frugiperda (Fall armyworm), this protein is Large ribosomal subunit protein eL32 (RpL32).